We begin with the raw amino-acid sequence, 152 residues long: Acidic phospholipase A2 (152 aa).

Positions 1 to 21 are cleaved as a signal peptide; it reads MNPAHLLVLSAVCVSLLGASS. Residues 22-27 constitute a propeptide that is removed on maturation; sequence IPPQPL. Intrachain disulfides connect C38-C104, C54-C151, C56-C72, C71-C132, C78-C125, C88-C118, and C111-C123. Residues Y55, G57, and G59 each contribute to the Ca(2+) site. H75 is a catalytic residue. Ca(2+) is bound at residue D76. The active site involves D126.

It belongs to the phospholipase A2 family. Group I subfamily. D49 sub-subfamily. The cofactor is Ca(2+). As to expression, expressed by the venom gland.

It is found in the secreted. The catalysed reaction is a 1,2-diacyl-sn-glycero-3-phosphocholine + H2O = a 1-acyl-sn-glycero-3-phosphocholine + a fatty acid + H(+). Its function is as follows. PLA2 catalyzes the calcium-dependent hydrolysis of the 2-acyl groups in 3-sn-phosphoglycerides. The protein is Acidic phospholipase A2 of Ophiophagus hannah (King cobra).